The chain runs to 390 residues: Chalcone synthase (390 aa).

Residue cysteine 164 is part of the active site.

Belongs to the thiolase-like superfamily. Chalcone/stilbene synthases family.

The enzyme catalyses (E)-4-coumaroyl-CoA + 3 malonyl-CoA + 3 H(+) = 2',4,4',6'-tetrahydroxychalcone + 3 CO2 + 4 CoA. It participates in secondary metabolite biosynthesis; flavonoid biosynthesis. The primary product of this enzyme is 4,2',4',6'-tetrahydroxychalcone (also termed naringenin-chalcone or chalcone) which can under specific conditions spontaneously isomerize into naringenin. This chain is Chalcone synthase (CHS), found in Onobrychis viciifolia (Common sainfoin).